Here is a 263-residue protein sequence, read N- to C-terminus: Fructose-bisphosphate aldolase class 1 (263 aa).

Substrate-binding positions include 24–25 (DH), His29, Asp33, and Trp144. Tyr146 functions as the Proton donor in the catalytic mechanism. Substrate contacts are provided by residues Arg148, 177–179 (KIK), 202–204 (SGG), and 231–232 (GR). The Schiff-base intermediate with dihydroxyacetone-P role is filled by Lys177.

The protein belongs to the DeoC/FbaB aldolase family. Homodecamer (dimer of pentamers).

The protein localises to the cytoplasm. The catalysed reaction is beta-D-fructose 1,6-bisphosphate = D-glyceraldehyde 3-phosphate + dihydroxyacetone phosphate. Activated by citrate. Functionally, catalyzes the reversible cleavage of fructose 1,6-bisphosphate (FBP) to glyceraldehyde 3-phosphate (GAP) and dihydroxyacetone phosphate (DHAP). The chain is Fructose-bisphosphate aldolase class 1 (fba) from Thermoproteus tenax (strain ATCC 35583 / DSM 2078 / JCM 9277 / NBRC 100435 / Kra 1).